A 541-amino-acid chain; its full sequence is Putative asparagine synthetase [glutamine-hydrolyzing] 1 (541 aa).

Cysteine 2 functions as the For GATase activity in the catalytic mechanism. Positions 2–213 (CSISGIIVKD…PNSQLIYYLD (212 aa)) constitute a Glutamine amidotransferase type-2 domain. Residues 68-72 (RLAIV), 92-94 (NGE), and aspartate 116 contribute to the L-glutamine site. Residues valine 289 and 363–364 (SG) contribute to the ATP site.

This sequence belongs to the asparagine synthetase family.

The enzyme catalyses L-aspartate + L-glutamine + ATP + H2O = L-asparagine + L-glutamate + AMP + diphosphate + H(+). Its pathway is amino-acid biosynthesis; L-asparagine biosynthesis; L-asparagine from L-aspartate (L-Gln route): step 1/1. The chain is Putative asparagine synthetase [glutamine-hydrolyzing] 1 from Methanocaldococcus jannaschii (strain ATCC 43067 / DSM 2661 / JAL-1 / JCM 10045 / NBRC 100440) (Methanococcus jannaschii).